The sequence spans 148 residues: HTH-type transcriptional regulator SarZ (148 aa).

In terms of domain architecture, HTH marR-type spans S9–S139. The H-T-H motif DNA-binding region spans I55 to K78.

It belongs to the SarZ family.

It localises to the cytoplasm. In terms of biological role, activates transcription of virulence factors alpha- and beta hemolysin genes (hla and hlb). Also, activates RNAIII expression, a central regulator transcribed from the agr locus. This Staphylococcus aureus (strain USA300) protein is HTH-type transcriptional regulator SarZ (sarZ).